The primary structure comprises 176 residues: N5-carboxyaminoimidazole ribonucleotide mutase (176 aa).

Substrate contacts are provided by Ser-14, Asp-17, and Arg-44.

The protein belongs to the AIR carboxylase family. Class I subfamily.

The catalysed reaction is 5-carboxyamino-1-(5-phospho-D-ribosyl)imidazole + H(+) = 5-amino-1-(5-phospho-D-ribosyl)imidazole-4-carboxylate. Its pathway is purine metabolism; IMP biosynthesis via de novo pathway; 5-amino-1-(5-phospho-D-ribosyl)imidazole-4-carboxylate from 5-amino-1-(5-phospho-D-ribosyl)imidazole (N5-CAIR route): step 2/2. Catalyzes the conversion of N5-carboxyaminoimidazole ribonucleotide (N5-CAIR) to 4-carboxy-5-aminoimidazole ribonucleotide (CAIR). In Synechocystis sp. (strain ATCC 27184 / PCC 6803 / Kazusa), this protein is N5-carboxyaminoimidazole ribonucleotide mutase.